The sequence spans 101 residues: NAD(P)H-quinone oxidoreductase subunit 4L, chloroplastic (101 aa).

Helical transmembrane passes span 2–22 (MLEYVLGLSAYLFSIGIYGLI), 32–52 (MCLELILNAVNLNFVTFSDFF), and 61–81 (ILSIFVISIAAAEAAIGPAIV).

This sequence belongs to the complex I subunit 4L family. In terms of assembly, NDH is composed of at least 16 different subunits, 5 of which are encoded in the nucleus.

The protein localises to the plastid. The protein resides in the chloroplast thylakoid membrane. It catalyses the reaction a plastoquinone + NADH + (n+1) H(+)(in) = a plastoquinol + NAD(+) + n H(+)(out). The enzyme catalyses a plastoquinone + NADPH + (n+1) H(+)(in) = a plastoquinol + NADP(+) + n H(+)(out). Its function is as follows. NDH shuttles electrons from NAD(P)H:plastoquinone, via FMN and iron-sulfur (Fe-S) centers, to quinones in the photosynthetic chain and possibly in a chloroplast respiratory chain. The immediate electron acceptor for the enzyme in this species is believed to be plastoquinone. Couples the redox reaction to proton translocation, and thus conserves the redox energy in a proton gradient. The protein is NAD(P)H-quinone oxidoreductase subunit 4L, chloroplastic of Populus alba (White poplar).